A 374-amino-acid chain; its full sequence is Heat stress transcription factor A-8 (374 aa).

Residues 17–112 (VAPFLRKCYD…LLKNVIRRKN (96 aa)) mediate DNA binding. Residues 126-192 (TTYAQEKSGL…EMLSFLVMVM (67 aa)) are hydrophobic repeat HR-A/B. Positions 285-294 (DGAWEKLLLL) match the AHA1 motif. The Nuclear localization signal motif lies at 298–303 (RKKTKK). Residues 330 to 339 (KSYMLKLISE) carry the AHA2 motif. A Nuclear export signal motif is present at residues 363-370 (LTEQMELL).

The protein belongs to the HSF family. Class A subfamily. Homotrimer. Exhibits temperature-dependent phosphorylation.

It is found in the cytoplasm. Its subcellular location is the nucleus. Transcriptional activator that specifically binds DNA sequence 5'-AGAAnnTTCT-3' known as heat shock promoter elements (HSE). This is Heat stress transcription factor A-8 (HSFA8) from Arabidopsis thaliana (Mouse-ear cress).